Reading from the N-terminus, the 356-residue chain is Arginine kinase 1 (356 aa).

A Phosphagen kinase N-terminal domain is found at 6–91 (VLAKLEEGYA…FDPIIEDYHG (86 aa)). 64–68 (GVGIY) contacts substrate. A Phosphagen kinase C-terminal domain is found at 119 to 356 (YVISTRVRCG…TELIKLEKSL (238 aa)). ATP-binding positions include 122 to 126 (STRVR) and histidine 185. Glutamate 225 contributes to the substrate binding site. Residue arginine 229 coordinates ATP. Cysteine 271 lines the substrate pocket. Residues 280 to 284 (RASVH) and 309 to 314 (RGTRGE) contribute to the ATP site. Glutamate 314 is a binding site for substrate.

Belongs to the ATP:guanido phosphotransferase family.

The enzyme catalyses L-arginine + ATP = N(omega)-phospho-L-arginine + ADP + H(+). The chain is Arginine kinase 1 from Drosophila melanogaster (Fruit fly).